Here is a 281-residue protein sequence, read N- to C-terminus: Bidirectional sugar transporter SWEET14 (281 aa).

At 1–6 (MVLTHN) the chain is on the extracellular side. A helical transmembrane segment spans residues 7-27 (VLAVTFGVLGNIISFIVFLAP). Residues 11–97 (TFGVLGNIIS…ILFITYANKK (87 aa)) enclose the MtN3/slv 1 domain. The Cytoplasmic portion of the chain corresponds to 28–42 (VPTFVRICKKKSIEG). Residues 43-63 (FESLPYVSALFSAMLWIYYAL) traverse the membrane as a helical segment. Topologically, residues 64 to 70 (QKDGAGF) are extracellular. A helical membrane pass occupies residues 71 to 91 (LLITINAVGCFIETIYIILFI). Residues 92 to 104 (TYANKKARISTLK) lie on the Cytoplasmic side of the membrane. Residues 105 to 125 (VLGLLNFLGFAAIILVCELLT) traverse the membrane as a helical segment. The Extracellular segment spans residues 126 to 132 (KGSNREK). The helical transmembrane segment at 133–153 (VLGGICVGFSVCVFAAPLSIM) threads the bilayer. The 84-residue stretch at 133–216 (VLGGICVGFS…MILYVIFKYY (84 aa)) folds into the MtN3/slv 2 domain. The Cytoplasmic segment spans residues 154 to 166 (RVVIRTKSVEFMP). A helical membrane pass occupies residues 167 to 187 (FSLSLFLTISAITWLFYGLAI). The Extracellular portion of the chain corresponds to 188–192 (KDFYV). Residues 193-213 (ALPNILGAFLGAVQMILYVIF) traverse the membrane as a helical segment. Residues 214-281 (KYYKTPLVVD…EDQMDKKMPN (68 aa)) lie on the Cytoplasmic side of the membrane. A compositionally biased stretch (polar residues) spans 244–259 (TPASGDLTVQPQTNPD). The disordered stretch occupies residues 244–281 (TPASGDLTVQPQTNPDVSHPIKTHGGDLEDQMDKKMPN). Basic and acidic residues predominate over residues 267-281 (HGGDLEDQMDKKMPN).

The protein belongs to the SWEET sugar transporter family. In terms of assembly, forms homooligomers and/or heterooligomers.

It localises to the cell membrane. Its function is as follows. Mediates both low-affinity uptake and efflux of sugar across the plasma membrane. The polypeptide is Bidirectional sugar transporter SWEET14 (Arabidopsis thaliana (Mouse-ear cress)).